The chain runs to 289 residues: Signal peptidase I (289 aa).

Over 1–43 the chain is Cytoplasmic; it reads MKKLTSTTTTLWDNKLFINNLKNFMQTNTESNNNKTTAQEWKS. A helical membrane pass occupies residues 44 to 64; sequence FILVVVIALMIRILIIESFVV. At 65–289 the chain is on the periplasmic side; sequence PTGSMKATIL…IFRNLYSIED (225 aa). Active-site residues include Ser-68 and Lys-131.

Belongs to the peptidase S26 family.

It is found in the cell inner membrane. It carries out the reaction Cleavage of hydrophobic, N-terminal signal or leader sequences from secreted and periplasmic proteins.. In Rickettsia bellii (strain OSU 85-389), this protein is Signal peptidase I (lepB).